Consider the following 229-residue polypeptide: Large ribosomal subunit protein uL1 (229 aa).

The protein belongs to the universal ribosomal protein uL1 family. In terms of assembly, part of the 50S ribosomal subunit.

Its function is as follows. Binds directly to 23S rRNA. The L1 stalk is quite mobile in the ribosome, and is involved in E site tRNA release. In terms of biological role, protein L1 is also a translational repressor protein, it controls the translation of the L11 operon by binding to its mRNA. The sequence is that of Large ribosomal subunit protein uL1 from Caulobacter sp. (strain K31).